Here is a 365-residue protein sequence, read N- to C-terminus: Chorismate synthase (365 aa).

The span at 41–51 (IQKELDRRRPG) shows a compositional bias: basic and acidic residues. Residues 41–62 (IQKELDRRRPGQSEVSTPRSEA) form a disordered region. R48 is a binding site for NADP(+). Residues 125–127 (RSS), G285, 300–304 (KPTPS), and R327 contribute to the FMN site.

Belongs to the chorismate synthase family. FMNH2 serves as cofactor.

It catalyses the reaction 5-O-(1-carboxyvinyl)-3-phosphoshikimate = chorismate + phosphate. It participates in metabolic intermediate biosynthesis; chorismate biosynthesis; chorismate from D-erythrose 4-phosphate and phosphoenolpyruvate: step 7/7. Catalyzes the anti-1,4-elimination of the C-3 phosphate and the C-6 proR hydrogen from 5-enolpyruvylshikimate-3-phosphate (EPSP) to yield chorismate, which is the branch point compound that serves as the starting substrate for the three terminal pathways of aromatic amino acid biosynthesis. This reaction introduces a second double bond into the aromatic ring system. The polypeptide is Chorismate synthase (Methanosarcina acetivorans (strain ATCC 35395 / DSM 2834 / JCM 12185 / C2A)).